A 560-amino-acid chain; its full sequence is Interferon alpha/beta receptor 1 (560 aa).

Positions 1-24 (MLGLLGATTLMLVAGAPWVLPAGG) are cleaved as a signal peptide. At 25 to 437 (ADLRSPENVV…EKTKPGSTSQ (413 aa)) the chain is on the extracellular side. 4 consecutive Fibronectin type-III domains span residues 29–125 (SPEN…FQEA), 133–224 (HLEA…INTT), 231–329 (SPEN…TEMQ), and 333–433 (FPPV…TKPG). The N-linked (GlcNAc...) asparagine glycan is linked to Asn55. A disulfide bridge links Cys76 with Cys84. N-linked (GlcNAc...) asparagine glycans are attached at residues Asn85, Asn108, and Asn172. Cys199 and Cys220 are disulfide-bonded. Asn222, Asn249, and Asn254 each carry an N-linked (GlcNAc...) asparagine glycan. The cysteines at positions 283 and 291 are disulfide-linked. N-linked (GlcNAc...) asparagine glycans are attached at residues Asn313, Asn377, and Asn417. Cysteines 404 and 427 form a disulfide. Residues 438–458 (AWLIAGILSAILLFPAVFYGV) form a helical membrane-spanning segment. Over 459–560 (KVVSRCINYV…GEEILRQAAV (102 aa)) the chain is Cytoplasmic. Residue Cys464 is the site of S-palmitoyl cysteine attachment. 2 positions are modified to phosphotyrosine; by TYK2: Tyr467 and Tyr482. The important for interaction with TYK2 stretch occupies residues 492–501 (LLSTSEEQTE). A phosphoserine mark is found at Ser496 and Ser536. The interval 520–560 (QIDDNHSRCSSQTNRDSGVYSNEDENSGSKIGEEILRQAAV) is disordered. Residues 527–539 (RCSSQTNRDSGVY) show a composition bias toward polar residues. The segment covering 550–560 (IGEEILRQAAV) has biased composition (basic and acidic residues).

This sequence belongs to the type II cytokine receptor family. In terms of assembly, heterodimer with IFNAR2; forming the receptor for type I interferon. Interacts with TYK2. Interacts with STAT1 and STAT2; the interaction requires its phosphorylation at Tyr-482. Interacts (serine-phosphorylated form) with FBXW11, the substrate recognition component of a SCF (SKP1-CUL1-F-box protein) E3 ubiquitin-protein ligase complex. Interacts with SHMT2; this promotes interaction with ABRAXAS2 and the BRISC complex. Interacts with TRIM10; this interaction prevents association between IFNAR1 and TYK2. In terms of processing, ubiquitinated, leading to its internalization and degradation. Polyubiquitinated via 'Lys-48'-linked and 'Lys-63'-linked ubiquitin chains, leading to receptor internalization and lysosomal degradation. The 'Lys-63'-linked ubiquitin chains are cleaved off by the BRISC complex. Post-translationally, phosphorylated on tyrosine residues in response to interferon-binding: phosphorylation by TYK2 tyrosine kinase creates docking sites for STAT proteins. Phosphorylated on serine residues in response to interferon binding; this promotes interaction with FBXW11 and ubiquitination. Palmitoylation at Cys-464 is required for the activation of STAT1 and STAT2.

Its subcellular location is the cell membrane. The protein localises to the late endosome. The protein resides in the lysosome. Functionally, together with IFNAR2, forms the heterodimeric receptor for type I interferons (including interferons alpha, beta, epsilon, omega and kappa). Type I interferon binding activates the JAK-STAT signaling cascade, resulting in transcriptional activation or repression of interferon-regulated genes that encode the effectors of the interferon response. Mechanistically, type I interferon-binding brings the IFNAR1 and IFNAR2 subunits into close proximity with one another, driving their associated Janus kinases (JAKs) (TYK2 bound to IFNAR1 and JAK1 bound to IFNAR2) to cross-phosphorylate one another. The activated kinases phosphorylate specific tyrosine residues on the intracellular domains of IFNAR1 and IFNAR2, forming docking sites for the STAT transcription factors. STAT proteins are then phosphorylated by the JAKs, promoting their translocation into the nucleus to regulate expression of interferon-regulated genes. Can also act independently of IFNAR2: form an active IFNB1 receptor by itself and activate a signaling cascade that does not involve activation of the JAK-STAT pathway. This chain is Interferon alpha/beta receptor 1 (IFNAR1), found in Sus scrofa (Pig).